A 226-amino-acid chain; its full sequence is ATP synthase F(0) complex subunit a (226 aa).

The next 6 membrane-spanning stretches (helical) occupy residues 6 to 26 (FASF…IVLF), 68 to 88 (WALM…LGLL), 97 to 117 (QLSM…ITGF), 138 to 158 (IPML…ALAV), 164 to 184 (ITAG…LMSI), and 189 to 209 (ALIT…VAMI).

The protein belongs to the ATPase A chain family. As to quaternary structure, component of the ATP synthase complex composed at least of ATP5F1A/subunit alpha, ATP5F1B/subunit beta, ATP5MC1/subunit c (homooctomer), MT-ATP6/subunit a, MT-ATP8/subunit 8, ATP5ME/subunit e, ATP5MF/subunit f, ATP5MG/subunit g, ATP5MK/subunit k, ATP5MJ/subunit j, ATP5F1C/subunit gamma, ATP5F1D/subunit delta, ATP5F1E/subunit epsilon, ATP5PF/subunit F6, ATP5PB/subunit b, ATP5PD/subunit d, ATP5PO/subunit OSCP. ATP synthase complex consists of a soluble F(1) head domain (subunits alpha(3) and beta(3)) - the catalytic core - and a membrane F(0) domain - the membrane proton channel (subunits c, a, 8, e, f, g, k and j). These two domains are linked by a central stalk (subunits gamma, delta, and epsilon) rotating inside the F1 region and a stationary peripheral stalk (subunits F6, b, d, and OSCP). Interacts with DNAJC30; interaction is direct.

Its subcellular location is the mitochondrion inner membrane. It catalyses the reaction H(+)(in) = H(+)(out). In terms of biological role, subunit a, of the mitochondrial membrane ATP synthase complex (F(1)F(0) ATP synthase or Complex V) that produces ATP from ADP in the presence of a proton gradient across the membrane which is generated by electron transport complexes of the respiratory chain. ATP synthase complex consist of a soluble F(1) head domain - the catalytic core - and a membrane F(1) domain - the membrane proton channel. These two domains are linked by a central stalk rotating inside the F(1) region and a stationary peripheral stalk. During catalysis, ATP synthesis in the catalytic domain of F(1) is coupled via a rotary mechanism of the central stalk subunits to proton translocation. With the subunit c (ATP5MC1), forms the proton-conducting channel in the F(0) domain, that contains two crucial half-channels (inlet and outlet) that facilitate proton movement from the mitochondrial intermembrane space (IMS) into the matrix. Protons are taken up via the inlet half-channel and released through the outlet half-channel, following a Grotthuss mechanism. This is ATP synthase F(0) complex subunit a from Bos indicus (Zebu).